We begin with the raw amino-acid sequence, 1855 residues long: MGLARATAGLGPCCPPAPALLGAGLRWGGFLFAWILVSFSCHLASTQGAPEDVDVLQRLGLSWTKAGGGRSPAPPGVIPFPSGFIFTQRAKLQAPTTNVLPTTLGRELALVLSLCSHRVNHAFLFAIRSRKHRLQLGLQFLPGRTLVHLGPRQSVAFDLDVHDGRWHHLALELRGRTVTLVTACGQHRVPVPLPSRRDSMLDPQGSFLLGKMNPRAVQFEGALCQFSIHPVAQVAHNYCAHLRERCRQVDTYGPQVGALFPWDSGPAFALHPEPALLGLGNLTRNPATLGSRPISRGLMVTMAPAVPTKPLRMVHQDVSKLGSSQTPLVPAKQSARKTPSPFPSAALANSTRVFHSAPAQPRQITATSPTKRPPTKPSVSSLSVTPMKSPQAIQKAGTPSFSRPIPTTQKPTPLTSHPSPSKVSSATVRPVQKTFMTPQPPTLSPQALHPITGLPKKFTIPTVAKPQSKMTSWASKPVLARTNVPKALEQTVVAQSSVSYLGSQTLATALPPLGVGNSRMMPSTRDSTSTPAGSKKITGLEASKKTRHKSSPRKPIPLSSGKTARDASPRDLTTKPSQLSTPALVLAPAHLLSSSPQPTSSSFSFFHLPEPTPFLMLMGPPGSKGDCGLPGPPGLPGLPGSPGPRGPRGPPGPFGNPGLPGPPGAKGQKGDPGLSPGQAHDGAKGNMGLPGLAGNPGPMGRKGHKGHPGAAGHPGEQGQPGPEGSPGAKGYPGRQGFPGPVGDPGPKGSRGYIGLPGLFGLPGSDGERGLPGIPGKRGEMGRPGFPGDFGERGPPGLDGNPGEIGLPGPPGVLGLLGDMGALGPVGYPGPKGMKGLMGGVGEPGLKGDKGEQGVPGVSGDPGFQGDKGSHGLPGFPGARGKPGPMGKAGDKGSLGLPGPPGPEGFPGDIGPPGDNGPEGMKGKPGARGLPGPPGQLGPEGDEGPMGPPGVPGLEGQPGRKGFPGRPGLDGSKGEPGDPGRPGPVGEQGLMGFVGLVGEPGIVGEKGDRGVMGPPGAPGPKGSMGHPGTPGGVGDPGEPGPWGPPGSRGLPGMRGAKGHRGPRGPDGPAGEQGSKGLKGRVGPRGRPGQPGQQGAAGERGHSGAKGFLGIPGPSGPPGAKGLPGEPGSQGPQGPVGPPGEMGPKGPPGAVGEPGLPGDSGMKGDLGPLGPPGEQGLIGQRGEPGLEGDLGPVGPDGLKGDRGDPGPDGEHGEKGQEGLKGEEGLPGPPGITGVRGREGKPGSQGEKGQRGAKGAKGYQGQLGEMGIPGDPGPPGTPGPKGSRGTLGPMGAPGRMGAQGEPGLAGYNGHKGITGPLGPPGPKGEKGEQGEDGKTEGAPGPPGERGPVGDRGDRGEPGDPGYPGQEGVQGLRGEPGQQGQPGHPGPRGRPGPKGSKGEEGPKGKPGKAGASGRRGTQGLQGLPGPRGVVGRQGPEGMAGQDGNPGRDGRPGYQGEQGNDGDPGPVGPAGRRGNPGVAGLPGAQGPPGFKGESGLPGQLGPPGKRGTEGGTGLPGNQGEPGSKGQPGDSGEMGFPGVAGLFGPKGPPGDIGFKGIQGPRGPPGLMGKEGIIGPPGMLGPSGLPGPKGDRGSRGDWGLQGPRGPPGPRGRPGPPGPPWHPVQFQQDDLEAAFQTWMDAHGAVRLEQGYSYPDQLMLDQGGEIFKTLHYLSNLIQSIKTPLGTKENPARVCRDLMDCEQKMADGIYWVDPNLGCSSDTIEVSCNFTHGGQTCLKPITASKAEFAVSRVQMNFLHLLSSEGTQHITIHCLNMTVWQEGPARPSARQAVRFRAWNGQVFEAGGQFRPEVSMDGCKVHDGRWHQTLFTFRTQDPQQLPIVSVDNLPPVSSGKQYRLEVGPACFL.

The first 48 residues, 1 to 48 (MGLARATAGLGPCCPPAPALLGAGLRWGGFLFAWILVSFSCHLASTQG), serve as a signal peptide directing secretion. Positions 49–618 (APEDVDVLQR…PEPTPFLMLM (570 aa)) are cleaved as a propeptide — N-terminal propeptide. Residues 81-246 (PSGFIFTQRA…NYCAHLRERC (166 aa)) enclose the Laminin G-like domain. Asn-281 and Asn-349 each carry an N-linked (GlcNAc...) asparagine glycan. 4 disordered regions span residues 317–428 (DVSK…SATV), 511–580 (PPLG…SQLS), 617–787 (LMGP…GFPG), and 838–1617 (GGVG…HPVQ). 2 stretches are compositionally biased toward polar residues: residues 382–427 (LSVT…SSAT) and 520–532 (MMPS…STPA). The segment covering 563–573 (TARDASPRDLT) has biased composition (basic and acidic residues). 13 consecutive Collagen-like domains span residues 619-673 (GPPG…GDPG), 682-741 (GAKG…PGPV), 751-810 (GYIG…PGPP), 826-885 (GYPG…PGPM), 886-945 (GKAG…EGPM), 946-1005 (GPPG…VGEK), 1006-1047 (GDRG…PGSR), 1048-1105 (GLPG…GAKG), 1108-1155 (GIPG…PGLP), 1156-1215 (GDSG…KGQE), 1216-1275 (GLKG…PGTP), 1276-1330 (GPKG…GEDG), and 1334-1393 (GAPG…KGSK). The segment at 619-1612 (GPPGSKGDCG…RGRPGPPGPP (994 aa)) is triple-helical region. Pro residues predominate over residues 630 to 663 (PGPPGLPGLPGSPGPRGPRGPPGPFGNPGLPGPP). Low complexity predominate over residues 708–728 (PGAAGHPGEQGQPGPEGSPGA). Residues 905-918 (FPGDIGPPGDNGPE) are compositionally biased toward low complexity. Residues 1027–1036 (GTPGGVGDPG) are compositionally biased toward gly residues. Low complexity-rich tracts occupy residues 1083-1095 (RGRP…QGAA), 1121-1131 (LPGEPGSQGPQ), and 1161-1176 (KGDL…QGLI). Basic and acidic residues-rich tracts occupy residues 1196–1221 (LKGD…KGEE), 1320–1332 (KGEK…DGKT), and 1344–1354 (PVGDRGDRGEP). Composition is skewed to low complexity over residues 1369-1378 (RGEPGQQGQP) and 1404-1431 (KAGA…RQGP). 3 Collagen-like domains span residues 1433–1492 (GMAG…SGLP), 1493–1552 (GQLG…KGIQ), and 1553–1612 (GPRG…PGPP). Positions 1566–1581 (IIGPPGMLGPSGLPGP) are enriched in low complexity. Residues 1597 to 1614 (RGPPGPRGRPGPPGPPWH) show a composition bias toward pro residues. Positions 1616-1855 (VQFQQDDLEA…RLEVGPACFL (240 aa)) are cleaved as a propeptide — C-terminal propeptide. Positions 1655-1855 (GEIFKTLHYL…RLEVGPACFL (201 aa)) constitute a Fibrillar collagen NC1 domain. Cystine bridges form between Cys-1685–Cys-1717, Cys-1726–Cys-1853, and Cys-1762–Cys-1806. Positions 1703, 1705, 1708, and 1711 each coordinate Ca(2+). Asn-1764 is a glycosylation site (N-linked (GlcNAc...) asparagine).

This sequence belongs to the fibrillar collagen family.

The protein localises to the secreted. It is found in the extracellular space. Its subcellular location is the extracellular matrix. Plays a role during the calcification of cartilage and the transition of cartilage to bone. This Rattus norvegicus (Rat) protein is Collagen alpha-1(XXVII) chain (Col27a1).